We begin with the raw amino-acid sequence, 426 residues long: Glutamate-1-semialdehyde 2,1-aminomutase (426 aa).

Lys265 carries the N6-(pyridoxal phosphate)lysine modification.

The protein belongs to the class-III pyridoxal-phosphate-dependent aminotransferase family. HemL subfamily. As to quaternary structure, homodimer. The cofactor is pyridoxal 5'-phosphate.

The protein localises to the cytoplasm. The catalysed reaction is (S)-4-amino-5-oxopentanoate = 5-aminolevulinate. It participates in porphyrin-containing compound metabolism; protoporphyrin-IX biosynthesis; 5-aminolevulinate from L-glutamyl-tRNA(Glu): step 2/2. This Shigella flexneri serotype 5b (strain 8401) protein is Glutamate-1-semialdehyde 2,1-aminomutase.